A 64-amino-acid polypeptide reads, in one-letter code: uncharacterized protein (64 aa).

Residues 35–64 are disordered; it reads TIRKPPIEHAAGPLGSTSRAGHRSYGGVAS.

This is an uncharacterized protein from Mycobacterium tuberculosis (strain ATCC 25618 / H37Rv).